Consider the following 378-residue polypeptide: Quinolinate synthase (378 aa).

Residues histidine 59 and serine 80 each coordinate iminosuccinate. Cysteine 125 provides a ligand contact to [4Fe-4S] cluster. Iminosuccinate contacts are provided by residues 151–153 (YAN) and serine 168. Residue cysteine 212 coordinates [4Fe-4S] cluster. Residues 238–240 (HPE) and threonine 255 contribute to the iminosuccinate site. Position 309 (cysteine 309) interacts with [4Fe-4S] cluster.

It belongs to the quinolinate synthase family. Type 1 subfamily. It depends on [4Fe-4S] cluster as a cofactor.

Its subcellular location is the cytoplasm. It carries out the reaction iminosuccinate + dihydroxyacetone phosphate = quinolinate + phosphate + 2 H2O + H(+). Its pathway is cofactor biosynthesis; NAD(+) biosynthesis; quinolinate from iminoaspartate: step 1/1. In terms of biological role, catalyzes the condensation of iminoaspartate with dihydroxyacetone phosphate to form quinolinate. The polypeptide is Quinolinate synthase (Burkholderia cenocepacia (strain HI2424)).